Reading from the N-terminus, the 133-residue chain is Ribonuclease P protein component (133 aa).

This sequence belongs to the RnpA family. In terms of assembly, consists of a catalytic RNA component (M1 or rnpB) and a protein subunit.

It carries out the reaction Endonucleolytic cleavage of RNA, removing 5'-extranucleotides from tRNA precursor.. In terms of biological role, RNaseP catalyzes the removal of the 5'-leader sequence from pre-tRNA to produce the mature 5'-terminus. It can also cleave other RNA substrates such as 4.5S RNA. The protein component plays an auxiliary but essential role in vivo by binding to the 5'-leader sequence and broadening the substrate specificity of the ribozyme. The protein is Ribonuclease P protein component of Pseudomonas entomophila (strain L48).